Here is a 227-residue protein sequence, read N- to C-terminus: tRNA (guanine-N(1)-)-methyltransferase (227 aa).

Residues G107 and 127–132 (LGDFIL) each bind S-adenosyl-L-methionine.

Belongs to the RNA methyltransferase TrmD family. In terms of assembly, homodimer.

Its subcellular location is the cytoplasm. It catalyses the reaction guanosine(37) in tRNA + S-adenosyl-L-methionine = N(1)-methylguanosine(37) in tRNA + S-adenosyl-L-homocysteine + H(+). In terms of biological role, specifically methylates guanosine-37 in various tRNAs. This chain is tRNA (guanine-N(1)-)-methyltransferase, found in Mesomycoplasma hyopneumoniae (strain 232) (Mycoplasma hyopneumoniae).